A 152-amino-acid chain; its full sequence is Ribosomal RNA large subunit methyltransferase H (152 aa).

S-adenosyl-L-methionine is bound by residues L69, G96, and 118–123 (FGKLTF).

It belongs to the RNA methyltransferase RlmH family. As to quaternary structure, homodimer.

It is found in the cytoplasm. The catalysed reaction is pseudouridine(1915) in 23S rRNA + S-adenosyl-L-methionine = N(3)-methylpseudouridine(1915) in 23S rRNA + S-adenosyl-L-homocysteine + H(+). Its function is as follows. Specifically methylates the pseudouridine at position 1915 (m3Psi1915) in 23S rRNA. This Mesomycoplasma hyopneumoniae (strain 7448) (Mycoplasma hyopneumoniae) protein is Ribosomal RNA large subunit methyltransferase H.